The primary structure comprises 489 residues: Cytochrome P450 monooxygenase trt6 (489 aa).

A helical membrane pass occupies residues 10–30 (SLWSFGLWILVILSPVLFFAS). Residues Asn-364 and Asn-407 are each glycosylated (N-linked (GlcNAc...) asparagine). Cys-430 is a heme binding site.

The protein belongs to the cytochrome P450 family. It depends on heme as a cofactor.

It localises to the membrane. It functions in the pathway secondary metabolite biosynthesis; terpenoid biosynthesis. Its function is as follows. Cytochrome P450 monooxygenase; part of the gene cluster that mediates the biosynthesis of terretonin, a fungal meroterpenoid that acts as a mycotoxin. The first step of the pathway is the synthesis of 3,5-dimethylorsellinic acid (DMOA) by the polyketide synthase trt4. DMOA is then prenylated into farnesyl-DMOA by the polyprenyl transferase trt2. Methylation by the methyltransferase trt5 then leads to farnesyl-DMOA methyl ester which is further subject to epoxidation by the FAD-dependent monooxygenase trt8 to yield epoxyfarnesyl-DMOA methyl ester. Cyclization of epoxyfarnesyl-DMOA methyl ester by the terpene cyclase trt1 leads to a tetracycle intermediate which is in turn converted to preterretonin. Dehydrogenase trt9 comes next to transform preterretonin to preterrenoid. The FAD-dependent monooxygenase trt3 is then required for the C-hydroxylation at C16 of preterrenoid to yield terrenoid. The cytochrome P450 trt6 catalyzes three successive oxidations to transform terrenoid into an unstable intermediate, which then undergoes the D-ring expansion and unusual rearrangement of the methoxy group to afford the core skeleton of terretonin. Trt14 catalyzes the D-ring expansion of terretonin involving intramolecular methoxy rearrangement as well as the hydrolysis of the expanded D-ring and the methyl ester moiety. Finally, the nonheme iron-dependent dioxygenase trt7 accomplishes the last two oxidation reactions steps to complete the biosynthesis of terretonin. Terretonin C is produced via spontaneous decarboxylation of the terretonin precursor. Another shunt product of the terretonin biosynthesis is dihydrofarnesyl-DMOA, derived from epoxyfarnesyl-DMOA through hydrolysis of the epoxide. This chain is Cytochrome P450 monooxygenase trt6, found in Aspergillus terreus (strain NIH 2624 / FGSC A1156).